The following is a 272-amino-acid chain: Large ribosomal subunit protein uL2cz/uL2cy (272 aa).

A compositionally biased stretch (polar residues) spans 1-13; sequence MHLYKTSTPSTRN. Disordered regions lie at residues 1 to 27 and 222 to 272; these read MHLYKTSTPSTRNGAVDSQVKSNPRNN and NPVD…RRSK.

It belongs to the universal ribosomal protein uL2 family. As to quaternary structure, part of the 50S ribosomal subunit.

The protein localises to the plastid. The protein resides in the chloroplast. The chain is Large ribosomal subunit protein uL2cz/uL2cy (rpl2-A) from Buxus microphylla (Littleleaf boxwood).